A 338-amino-acid chain; its full sequence is Homocysteine S-methyltransferase 3 (338 aa).

Residues 12–326 enclose the Hcy-binding domain; that stretch reads AVRRWVDAAG…NTIRAIHRTL (315 aa). Positions 244, 311, and 312 each coordinate Zn(2+).

As to quaternary structure, monomer. Zn(2+) serves as cofactor.

The enzyme catalyses S-methyl-L-methionine + L-homocysteine = 2 L-methionine + H(+). Catalyzes methyl transfer from S-methylmethionine (SMM) to adenosyl-L-homocysteine (AdoMet). SMM degradation (by HMT-1, HMT-2, HMT-3 and HMT-4) and biosynthesis (by MMT1) constitute the SMM cycle in plants, which is probably required to achieve short term control of AdoMet level. The polypeptide is Homocysteine S-methyltransferase 3 (HMT-3) (Zea mays (Maize)).